Reading from the N-terminus, the 348-residue chain is Protein RecA (348 aa).

ATP is bound at residue 66 to 73 (GPESSGKT).

It belongs to the RecA family.

It is found in the cytoplasm. Functionally, can catalyze the hydrolysis of ATP in the presence of single-stranded DNA, the ATP-dependent uptake of single-stranded DNA by duplex DNA, and the ATP-dependent hybridization of homologous single-stranded DNAs. It interacts with LexA causing its activation and leading to its autocatalytic cleavage. The chain is Protein RecA from Legionella pneumophila.